The chain runs to 365 residues: Spermine synthase (365 aa).

Alanine 2 is modified (N-acetylalanine). Serine 57 carries the post-translational modification Phosphoserine. A PABS domain is found at 121 to 361 (RYWPTADGRL…ELWVFYTVWK (241 aa)). Glutamine 147 provides a ligand contact to S-adenosyl 3-(methylsulfanyl)propylamine. Spermidine is bound by residues tyrosine 176 and aspartate 200. S-adenosyl 3-(methylsulfanyl)propylamine contacts are provided by residues glutamate 219 and 254–255 (DC). Catalysis depends on aspartate 275, which acts as the Proton acceptor. Positions 350 and 352 each coordinate spermidine.

This sequence belongs to the spermidine/spermine synthase family. As to quaternary structure, homodimer. Dimerization is mediated through the N-terminal domain and seems to be required for activity as deletion of the N-terminal domain causes complete loss of activity.

The catalysed reaction is S-adenosyl 3-(methylsulfanyl)propylamine + spermidine = spermine + S-methyl-5'-thioadenosine + H(+). Its pathway is amine and polyamine biosynthesis; spermine biosynthesis; spermine from spermidine: step 1/1. Catalyzes the production of spermine from spermidine and decarboxylated S-adenosylmethionine (dcSAM). The protein is Spermine synthase (SMS) of Bos taurus (Bovine).